We begin with the raw amino-acid sequence, 538 residues long: L-aspartate oxidase (538 aa).

FAD is bound by residues 14-17 (SGAA), lysine 36, 43-50 (STYWAQGG), and aspartate 223. The active-site Proton donor/acceptor is the arginine 290. FAD-binding positions include glutamate 375 and 391 to 392 (SL).

It belongs to the FAD-dependent oxidoreductase 2 family. NadB subfamily. Requires FAD as cofactor.

It localises to the cytoplasm. It catalyses the reaction L-aspartate + O2 = iminosuccinate + H2O2. Its pathway is cofactor biosynthesis; NAD(+) biosynthesis; iminoaspartate from L-aspartate (oxidase route): step 1/1. Functionally, catalyzes the oxidation of L-aspartate to iminoaspartate, the first step in the de novo biosynthesis of NAD(+). The sequence is that of L-aspartate oxidase (nadB) from Pseudomonas aeruginosa (strain ATCC 15692 / DSM 22644 / CIP 104116 / JCM 14847 / LMG 12228 / 1C / PRS 101 / PAO1).